The chain runs to 85 residues: Small ribosomal subunit protein bS16 (85 aa).

Belongs to the bacterial ribosomal protein bS16 family.

This is Small ribosomal subunit protein bS16 from Xanthomonas euvesicatoria pv. vesicatoria (strain 85-10) (Xanthomonas campestris pv. vesicatoria).